The following is a 156-amino-acid chain: MIQSQINRNIRLDLADAILLSKAKKDLSFAEIADGTGLAEAFVTAALLGQQALPADAARLVGAKLDLDEDSILLLQMIPLRGCIDDRIPTDPTMYRFYEMLQVYGTTLKALVHEKFGDGIISAINFKLDVKKVADPEGGERAVITLDGKYLPTKPF.

Active-site residues include Arg96, Glu99, and Ser122.

The protein belongs to the cyanase family.

It carries out the reaction cyanate + hydrogencarbonate + 3 H(+) = NH4(+) + 2 CO2. Catalyzes the reaction of cyanate with bicarbonate to produce ammonia and carbon dioxide. The protein is Cyanate hydratase of Escherichia coli (strain K12 / DH10B).